The following is a 294-amino-acid chain: MTTSGVPFGMTLRPTRSRLSRRTPYSRDRLPPFETETRATILEDHPLLPECNTLTMHNVSYVRGLPCSVGFTLIQEWVVPWDMVLTREELVILRKCMHVCLCCANIDIMTSMMIHGYESWALHCHCSSPGSLQCIAGGQVLASWFRMVVDGAMFNQRFIWYREVVNYNMPKEVMFMSSVFMRGRHLIYLRLWYDGHVGSVVPAMSFGYSALHCGILNNIVVLCCSYCADLSEIRVRCCARRTRRLMLRAVRIIAEETTAMLYSCRTERRRQQFIRALLQHHRPILMHDYDSTPM.

The Nuclear localization signal signature appears at 239–255; sequence ARRTRRLMLRAVRIIAE.

The protein belongs to the adenoviridae E4 30 to 34 kDa protein family. As to quaternary structure, interacts with E1B-55k.

The protein localises to the host nucleus. Its subcellular location is the host cytoplasm. In terms of biological role, plays a major role to prevent cellular inhibition of viral genome replication by nuclear bodies. Assembles an SCF-like E3 ubiquitin ligase complex based on the cellular proteins ELOB, ELOC, CUL5 and RBX1, in cooperation with viral E1B-55K. This viral RING-type ligase ubiquitinates cellular substrates prior to proteasomal degradation: p53/TP53, LIG4, MRE11-RAD50-NBS1 (MRN) complex, ITGA3, DAXX and BLM. The sequence is that of Early 4 ORF6 protein from Homo sapiens (Human).